Here is a 361-residue protein sequence, read N- to C-terminus: Uroporphyrinogen decarboxylase (361 aa).

Residues 27-31 (RQAGR), D77, Y154, T209, and H327 each bind substrate.

Belongs to the uroporphyrinogen decarboxylase family. In terms of assembly, homodimer.

It localises to the cytoplasm. It carries out the reaction uroporphyrinogen III + 4 H(+) = coproporphyrinogen III + 4 CO2. It participates in porphyrin-containing compound metabolism; protoporphyrin-IX biosynthesis; coproporphyrinogen-III from 5-aminolevulinate: step 4/4. Its function is as follows. Catalyzes the decarboxylation of four acetate groups of uroporphyrinogen-III to yield coproporphyrinogen-III. In Coxiella burnetii (strain Dugway 5J108-111), this protein is Uroporphyrinogen decarboxylase.